The chain runs to 331 residues: Protein-methionine-sulfoxide reductase catalytic subunit MsrP (331 aa).

Residues M1–A57 constitute a signal peptide (tat-type signal). Residues N90, Y93–E94, C148, T183, N231, R236, and S247–K249 contribute to the Mo-molybdopterin site.

Belongs to the MsrP family. Heterodimer of a catalytic subunit (MsrP) and a heme-binding subunit (MsrQ). Mo-molybdopterin is required as a cofactor. Predicted to be exported by the Tat system. The position of the signal peptide cleavage has not been experimentally proven.

It is found in the periplasm. The enzyme catalyses L-methionyl-[protein] + a quinone + H2O = L-methionyl-(S)-S-oxide-[protein] + a quinol. The catalysed reaction is L-methionyl-[protein] + a quinone + H2O = L-methionyl-(R)-S-oxide-[protein] + a quinol. Part of the MsrPQ system that repairs oxidized periplasmic proteins containing methionine sulfoxide residues (Met-O), using respiratory chain electrons. Thus protects these proteins from oxidative-stress damage caused by reactive species of oxygen and chlorine generated by the host defense mechanisms. MsrPQ is essential for the maintenance of envelope integrity under bleach stress, rescuing a wide series of structurally unrelated periplasmic proteins from methionine oxidation. The catalytic subunit MsrP is non-stereospecific, being able to reduce both (R-) and (S-) diastereoisomers of methionine sulfoxide. The sequence is that of Protein-methionine-sulfoxide reductase catalytic subunit MsrP from Burkholderia mallei (strain ATCC 23344).